A 179-amino-acid polypeptide reads, in one-letter code: Peptidyl-tRNA hydrolase (179 aa).

Tyr-14 is a tRNA binding site. His-19 serves as the catalytic Proton acceptor. TRNA contacts are provided by Tyr-61, Asn-63, and Asn-107.

It belongs to the PTH family. In terms of assembly, monomer.

The protein localises to the cytoplasm. The catalysed reaction is an N-acyl-L-alpha-aminoacyl-tRNA + H2O = an N-acyl-L-amino acid + a tRNA + H(+). Hydrolyzes ribosome-free peptidyl-tRNAs (with 1 or more amino acids incorporated), which drop off the ribosome during protein synthesis, or as a result of ribosome stalling. Functionally, catalyzes the release of premature peptidyl moieties from peptidyl-tRNA molecules trapped in stalled 50S ribosomal subunits, and thus maintains levels of free tRNAs and 50S ribosomes. This is Peptidyl-tRNA hydrolase from Campylobacter lari (strain RM2100 / D67 / ATCC BAA-1060).